The sequence spans 578 residues: Proline--tRNA ligase (578 aa).

Belongs to the class-II aminoacyl-tRNA synthetase family. ProS type 1 subfamily. Homodimer.

The protein resides in the cytoplasm. It catalyses the reaction tRNA(Pro) + L-proline + ATP = L-prolyl-tRNA(Pro) + AMP + diphosphate. Functionally, catalyzes the attachment of proline to tRNA(Pro) in a two-step reaction: proline is first activated by ATP to form Pro-AMP and then transferred to the acceptor end of tRNA(Pro). As ProRS can inadvertently accommodate and process non-cognate amino acids such as alanine and cysteine, to avoid such errors it has two additional distinct editing activities against alanine. One activity is designated as 'pretransfer' editing and involves the tRNA(Pro)-independent hydrolysis of activated Ala-AMP. The other activity is designated 'posttransfer' editing and involves deacylation of mischarged Ala-tRNA(Pro). The misacylated Cys-tRNA(Pro) is not edited by ProRS. This chain is Proline--tRNA ligase, found in Burkholderia pseudomallei (strain 668).